The primary structure comprises 511 residues: Rab proteins geranylgeranyltransferase component A (511 aa).

Belongs to the Rab GDI family.

It localises to the cytoplasm. Its subcellular location is the perinuclear region. The protein resides in the cytoskeleton. It is found in the spindle pole. Its function is as follows. Binds unprenylated Rab proteins, presents it to the catalytic component B, and remains bound to it after the geranylgeranyl transfer reaction. The component A is thought to be regenerated by transferring its prenylated Rab to a protein acceptor. In Drosophila melanogaster (Fruit fly), this protein is Rab proteins geranylgeranyltransferase component A.